We begin with the raw amino-acid sequence, 28 residues long: Ornatin-D (28 aa).

Belongs to the ornatin family.

It is found in the secreted. In terms of biological role, potent inhibitor of fibrinogen interaction with platelet receptors expressed on glycoprotein IIb-IIIa complex. May prevent blood from clotting during either feeding and/or storage of ingested blood. The polypeptide is Ornatin-D (Placobdella ornata (Turtle leech)).